The chain runs to 161 residues: Nucleotide-binding protein Pfl01_4421 (161 aa).

It belongs to the YajQ family.

In terms of biological role, nucleotide-binding protein. In Pseudomonas fluorescens (strain Pf0-1), this protein is Nucleotide-binding protein Pfl01_4421.